Here is a 377-residue protein sequence, read N- to C-terminus: Ribosomal RNA large subunit methyltransferase G (377 aa).

Belongs to the methyltransferase superfamily. RlmG family.

It is found in the cytoplasm. It carries out the reaction guanosine(1835) in 23S rRNA + S-adenosyl-L-methionine = N(2)-methylguanosine(1835) in 23S rRNA + S-adenosyl-L-homocysteine + H(+). Its function is as follows. Specifically methylates the guanine in position 1835 (m2G1835) of 23S rRNA. The sequence is that of Ribosomal RNA large subunit methyltransferase G from Streptomyces coelicolor (strain ATCC BAA-471 / A3(2) / M145).